A 425-amino-acid polypeptide reads, in one-letter code: Enolase (425 aa).

Residue glutamine 162 participates in (2R)-2-phosphoglycerate binding. Glutamate 204 functions as the Proton donor in the catalytic mechanism. The Mg(2+) site is built by aspartate 241, glutamate 282, and aspartate 309. (2R)-2-phosphoglycerate is bound by residues lysine 334, arginine 363, serine 364, and lysine 385. Residue lysine 334 is the Proton acceptor of the active site.

This sequence belongs to the enolase family. Mg(2+) serves as cofactor.

It is found in the cytoplasm. The protein localises to the secreted. Its subcellular location is the cell surface. It carries out the reaction (2R)-2-phosphoglycerate = phosphoenolpyruvate + H2O. It participates in carbohydrate degradation; glycolysis; pyruvate from D-glyceraldehyde 3-phosphate: step 4/5. Catalyzes the reversible conversion of 2-phosphoglycerate (2-PG) into phosphoenolpyruvate (PEP). It is essential for the degradation of carbohydrates via glycolysis. The polypeptide is Enolase (Corynebacterium glutamicum (strain R)).